Reading from the N-terminus, the 164-residue chain is Phosphopantetheine adenylyltransferase (164 aa).

Ser10 serves as a coordination point for substrate. ATP contacts are provided by residues 10 to 11 (SF) and His18. The substrate site is built by Lys42, Leu74, and Arg88. Residues 89–91 (GLR), Glu99, and 124–130 (YAFLSSS) contribute to the ATP site.

Belongs to the bacterial CoaD family. Homohexamer. Mg(2+) serves as cofactor.

The protein localises to the cytoplasm. It carries out the reaction (R)-4'-phosphopantetheine + ATP + H(+) = 3'-dephospho-CoA + diphosphate. Its pathway is cofactor biosynthesis; coenzyme A biosynthesis; CoA from (R)-pantothenate: step 4/5. In terms of biological role, reversibly transfers an adenylyl group from ATP to 4'-phosphopantetheine, yielding dephospho-CoA (dPCoA) and pyrophosphate. The chain is Phosphopantetheine adenylyltransferase from Geobacillus thermodenitrificans (strain NG80-2).